Here is a 223-residue protein sequence, read N- to C-terminus: Global nitrogen regulator (223 aa).

The HTH crp-type domain maps to 143 to 216; that stretch reads RDMGSRLVSF…KKKITVHKPV (74 aa). Positions 176-195 form a DNA-binding region, H-T-H motif; that stretch reads HQAIAEAIGSTRVTVTRLLG.

In terms of biological role, required for full expression of proteins subject to ammonium repression. Transcriptional activator of genes subject to nitrogen control. Has affinity for the xisA upstream region. Binds to a 66 bp region containing three repeats of the consensus recognition sequence 5'-ACATT-3'. In Nostoc sp. (strain PCC 7120 / SAG 25.82 / UTEX 2576), this protein is Global nitrogen regulator (ntcA).